The chain runs to 339 residues: MYSFIRNCLFKLDAEVSHELSLDWLGAFERLHMLKPFALKVTPSPINVMGIDFPNRVGLAAGLDKNGDFVNALGQLGFGFVEIGTITPLAQSGNPKPRLFRLPEHQAIINRMGFNNKGVDHLVAQVQKRRYPGVLGINIGKNKITPEENALDDYVKCMDKVYAHADYITVNISSPNTPGLRNLQFGETLANLIAGIKQAQDRLAQTHDKYVPVAVKIAPDMTAEEIHSVADTLVNGNIDGVIATNTTISREAVQGHINADEAGGLSGLPVRDKSTEVIATLSAHLQGAMPIIGVGGIVEGADAQAKIAAGASLVQIYSGFIYKGPKLIAEAADAIASAG.

Residues 61–65 (AGLDK) and Thr-85 each bind FMN. Substrate is bound at residue Lys-65. Residue 110 to 114 (NRMGF) participates in substrate binding. Residues Asn-138 and Asn-171 each contribute to the FMN site. Asn-171 serves as a coordination point for substrate. Catalysis depends on Ser-174, which acts as the Nucleophile. Asn-176 is a substrate binding site. Residues Lys-216 and Thr-244 each contribute to the FMN site. 245-246 (NT) provides a ligand contact to substrate. FMN-binding positions include Gly-267, Gly-296, and 317-318 (YS).

Belongs to the dihydroorotate dehydrogenase family. Type 2 subfamily. Monomer. FMN serves as cofactor.

The protein localises to the cell membrane. The enzyme catalyses (S)-dihydroorotate + a quinone = orotate + a quinol. It participates in pyrimidine metabolism; UMP biosynthesis via de novo pathway; orotate from (S)-dihydroorotate (quinone route): step 1/1. Catalyzes the conversion of dihydroorotate to orotate with quinone as electron acceptor. In Saccharophagus degradans (strain 2-40 / ATCC 43961 / DSM 17024), this protein is Dihydroorotate dehydrogenase (quinone).